Reading from the N-terminus, the 642-residue chain is Uromodulin (642 aa).

An N-terminal signal peptide occupies residues 1-26; sequence MGQLSSLTSVWMVVVVTSWVIIAANI. The EGF-like 1 domain occupies 32-64; it reads RSCSECHSNATCMEDGMVTTCSCLVGFTGSGFE. Cystine bridges form between C34–C43, C37–C52, C54–C65, C71–C85, C79–C94, C96–C108, C114–C128, C122–C137, C139–C150, C152–C163, C157–C172, C176–C269, C197–C284, C219–C257, C225–C289, C250–C258, C299–C308, C302–C317, C319–C348, C336–C426, and C367–C390. A glycan (N-linked (GlcNAc...) asparagine) is linked at N40. Positions 67–109 constitute an EGF-like 2; calcium-binding domain; sequence DLDECAIPGAHNCSEGSSCMNTLGSYLCTCPDGFRLTPGLGCI. N78 carries N-linked (GlcNAc...) asparagine glycosylation. Residues 110–151 enclose the EGF-like 3; calcium-binding domain; the sequence is DVDECSEPGLSRCHALATCINNKGNYSCVCPAGYRGDGQHCE. An N-linked (GlcNAc...) asparagine glycan is attached at N134. A beta hairpin region spans residues 152–173; sequence CSPGSCGPGLDCVPVGDALVCA. Positions 174-293 are D10C; sequence DPCQEHRILD…CYLAYCTDPT (120 aa). N-linked (GlcNAc...) asparagine glycans are attached at residues N234 and N246. N-linked (GlcNAc...) asparagine glycosylation occurs at N277. Residues 294–325 form the EGF-like 4 domain; that stretch reads SVLGTCEECSVEEDCKSHDGMWSCQCKQDFNV. N-linked (GlcNAc...) asparagine glycosylation occurs at N324. The segment at 335–430 is ZP-N; the sequence is ECRPNDIKVS…KINFECSYPL (96 aa). The region spanning 335-590 is the ZP domain; that stretch reads ECRPNDIKVS…PTCSGTRFRS (256 aa). N397 and N448 each carry an N-linked (GlcNAc...) asparagine glycan. The flexible ZP-N/ZP-C linker; important for secretion and polymerization into filaments stretch occupies residues 431–454; that stretch reads DMKVSLETSLQPIVSSLNISVGGT. Residues 455 to 465 are internal hydrophobic patch (IHP); sequence GMFTVRMALFQ. The interval 455–590 is ZP-C; sequence GMFTVRMALF…PTCSGTRFRS (136 aa). 3 disulfides stabilise this stretch: C507–C567, C528–C583, and C572–C579. N-linked (GlcNAc...) asparagine glycosylation is present at N514. The segment at 587–590 is essential for cleavage by HPN; it reads RFRS. The external hydrophobic patch (EHP); regulates polymerization into filaments stretch occupies residues 599–607; sequence VLNLGPITR. S620 is lipidated: GPI-anchor amidated serine. A propeptide spans 621–642 (removed in mature form); that stretch reads SLGFLKVCLPLLLSATLTLMFQ.

Homodimer that then polymerizes into long filaments. The filaments can additionally assemble laterally to form a sheet. The filaments consist of a zigzag-shaped backbone with laterally protruding arms which interact with bacterial adhesin fimH. Two fimH molecules can bind to a single UMOD monomer. Post-translationally, N-glycosylated. In terms of processing, proteolytically cleaved at a conserved C-terminal proteolytic cleavage site to generate the secreted form found in urine. This cleavage is catalyzed by HPN. In terms of tissue distribution, detected in kidney and pancreas.

The protein resides in the apical cell membrane. The protein localises to the basolateral cell membrane. Its subcellular location is the cell projection. It is found in the cilium membrane. It localises to the secreted. Functionally, functions in biogenesis and organization of the apical membrane of epithelial cells of the thick ascending limb of Henle's loop (TALH), where it promotes formation of complex filamentous gel-like structure that may play a role in the water barrier permeability. May serve as a receptor for binding and endocytosis of cytokines (IL-1, IL-2) and TNF. Facilitates neutrophil migration across renal epithelia. In terms of biological role, in the urine, may contribute to colloid osmotic pressure, retards passage of positively charged electrolytes, and inhibits formation of liquid containing supersaturated salts and subsequent formation of salt crystals. Protects against urinary tract infections by binding to type 1 fimbriated E.coli. Binds to bacterial adhesin fimH which mediates the stable formation of bacterial aggregates, prevents the binding of E.coli to uroplakins UPK1A and UPK1B which act as urothelial receptors for type I fimbriae, and allows for pathogen clearance through micturation. Also promotes aggregation of other bacteria including K.pneumoniae, P.aeruginosa and S.mitis and so may also protect against other uropathogens. This chain is Uromodulin (UMOD), found in Canis lupus familiaris (Dog).